Here is a 36-residue protein sequence, read N- to C-terminus: Beta/delta/mu-theraphotoxin-Pv1 (36 aa).

3 cysteine pairs are disulfide-bonded: cysteine 3–cysteine 17, cysteine 10–cysteine 22, and cysteine 16–cysteine 30. The residue at position 36 (phenylalanine 36) is a Phenylalanine amide.

Belongs to the neurotoxin 10 (Hwtx-1) family. Expressed by the venom gland.

The protein resides in the secreted. Its function is as follows. Gating-modifier toxin that targets voltage-gated sodium channels. Inhibits the inactivation of Nav1.7/SCN9A. The polypeptide is Beta/delta/mu-theraphotoxin-Pv1 (Poecilotheria vittata (Ghost ornamental tarantula)).